The following is a 330-amino-acid chain: Ketol-acid reductoisomerase (NADP(+)) (330 aa).

The KARI N-terminal Rossmann domain maps to 1 to 182 (MAVVYYDQDA…GATRAGVIET (182 aa)). NADP(+) contacts are provided by residues 25–28 (YGSQ), Arg-48, Ser-51, Ser-53, and 83–86 (DETQ). Residue His-108 is part of the active site. Position 134 (Gly-134) interacts with NADP(+). Residues 183–328 (TFKEETETDL…DQLREMMSWL (146 aa)) enclose the KARI C-terminal knotted domain. Residues Asp-191, Glu-195, Glu-227, and Glu-231 each coordinate Mg(2+). Ser-252 lines the substrate pocket.

The protein belongs to the ketol-acid reductoisomerase family. The cofactor is Mg(2+).

It carries out the reaction (2R)-2,3-dihydroxy-3-methylbutanoate + NADP(+) = (2S)-2-acetolactate + NADPH + H(+). It catalyses the reaction (2R,3R)-2,3-dihydroxy-3-methylpentanoate + NADP(+) = (S)-2-ethyl-2-hydroxy-3-oxobutanoate + NADPH + H(+). The protein operates within amino-acid biosynthesis; L-isoleucine biosynthesis; L-isoleucine from 2-oxobutanoate: step 2/4. It functions in the pathway amino-acid biosynthesis; L-valine biosynthesis; L-valine from pyruvate: step 2/4. Involved in the biosynthesis of branched-chain amino acids (BCAA). Catalyzes an alkyl-migration followed by a ketol-acid reduction of (S)-2-acetolactate (S2AL) to yield (R)-2,3-dihydroxy-isovalerate. In the isomerase reaction, S2AL is rearranged via a Mg-dependent methyl migration to produce 3-hydroxy-3-methyl-2-ketobutyrate (HMKB). In the reductase reaction, this 2-ketoacid undergoes a metal-dependent reduction by NADPH to yield (R)-2,3-dihydroxy-isovalerate. This is Ketol-acid reductoisomerase (NADP(+)) from Moorella thermoacetica (strain ATCC 39073 / JCM 9320).